A 948-amino-acid polypeptide reads, in one-letter code: Bifunctional uridylyltransferase/uridylyl-removing enzyme (948 aa).

A uridylyltransferase region spans residues 1 to 372 (METHHIDFST…RFANRSRKIP (372 aa)). A uridylyl-removing region spans residues 373 to 728 (GTVEFVEDRG…VRTDSFHAIT (356 aa)). The HD domain maps to 489-605 (VDEHLIRAVE…IDFADRVQSL (117 aa)). 2 consecutive ACT domains span residues 729–810 (EITV…EVIA) and 840–921 (VIEV…ERMP).

It belongs to the GlnD family. Requires Mg(2+) as cofactor.

The catalysed reaction is [protein-PII]-L-tyrosine + UTP = [protein-PII]-uridylyl-L-tyrosine + diphosphate. It catalyses the reaction [protein-PII]-uridylyl-L-tyrosine + H2O = [protein-PII]-L-tyrosine + UMP + H(+). Its activity is regulated as follows. Uridylyltransferase (UTase) activity is inhibited by glutamine, while glutamine activates uridylyl-removing (UR) activity. Modifies, by uridylylation and deuridylylation, the PII regulatory proteins (GlnB and homologs), in response to the nitrogen status of the cell that GlnD senses through the glutamine level. Under low glutamine levels, catalyzes the conversion of the PII proteins and UTP to PII-UMP and PPi, while under higher glutamine levels, GlnD hydrolyzes PII-UMP to PII and UMP (deuridylylation). Thus, controls uridylylation state and activity of the PII proteins, and plays an important role in the regulation of nitrogen fixation and metabolism. The sequence is that of Bifunctional uridylyltransferase/uridylyl-removing enzyme from Rhizobium tropici.